The following is a 495-amino-acid chain: Nuclear receptor subfamily 6 group A member 1 (495 aa).

A disordered region spans residues Met-1–Gly-34. Over residues Ser-9–Ala-18 the composition is skewed to gly residues. Positions Gln-72–Glu-147 form a DNA-binding region, nuclear receptor. Zn(2+)-binding residues include Cys-75, Cys-78, Cys-92, Cys-95, Cys-111, Cys-117, Cys-127, and Cys-130. 2 NR C4-type zinc fingers span residues Cys-75–Cys-95 and Cys-111–Cys-135. Disordered regions lie at residues Ile-145 to Glu-165 and Phe-177 to Ser-214. Residues Glu-180–His-192 show a composition bias toward basic and acidic residues. Residues His-187 to Leu-268 form a sufficient for interaction with UIMC1 region. The segment covering Ser-202–Ser-214 has biased composition (low complexity). Residues Gln-264 to Glu-495 form the NR LBD domain.

This sequence belongs to the nuclear hormone receptor family. NR6 subfamily. In terms of assembly, homodimer. Interacts with UIMC1. As to expression, expressed in the germ cells of both the adult testis and ovary, being most abundant in spermatids.

It is found in the nucleus. Its function is as follows. Orphan nuclear receptor that binds to a response element containing the sequence 5'-TCAAGGTCA-3'. Acts as a regulator of embryonic stem cell pluripotency by mediating repression of POU5F1/OCT4: binds to the DR0 element within the POU5F1/OCT4 promoter and inhibits POU5F1/OCT4 expression during embryonic stem cell differentiation. Required to restrict POU5F1/OCT4 expression to the germ cell lineage. Involved in the regulation of gene expression in germ cell development during gametogenesis. This Mus musculus (Mouse) protein is Nuclear receptor subfamily 6 group A member 1 (Nr6a1).